The chain runs to 788 residues: DNA ligase (788 aa).

NAD(+) contacts are provided by residues 35–39, 84–85, and Glu124; these read DAEYD and SL. Residue Lys126 is the N6-AMP-lysine intermediate of the active site. 4 residues coordinate NAD(+): Arg147, Glu184, Lys300, and Lys324. Zn(2+)-binding residues include Cys418, Cys421, Cys448, and Cys454. Positions 707–788 constitute a BRCT domain; sequence AEGLPLAGQT…FIERLAQLGS (82 aa).

This sequence belongs to the NAD-dependent DNA ligase family. LigA subfamily. Requires Mg(2+) as cofactor. It depends on Mn(2+) as a cofactor.

It catalyses the reaction NAD(+) + (deoxyribonucleotide)n-3'-hydroxyl + 5'-phospho-(deoxyribonucleotide)m = (deoxyribonucleotide)n+m + AMP + beta-nicotinamide D-nucleotide.. In terms of biological role, DNA ligase that catalyzes the formation of phosphodiester linkages between 5'-phosphoryl and 3'-hydroxyl groups in double-stranded DNA using NAD as a coenzyme and as the energy source for the reaction. It is essential for DNA replication and repair of damaged DNA. This is DNA ligase from Stutzerimonas stutzeri (strain A1501) (Pseudomonas stutzeri).